A 458-amino-acid polypeptide reads, in one-letter code: tRNA-2-methylthio-N(6)-dimethylallyladenosine synthase (458 aa).

One can recognise an MTTase N-terminal domain in the interval 2-118 (PKLYIKTYGC…VFEHVDGILR (117 aa)). Positions 11, 47, 81, 170, 174, and 177 each coordinate [4Fe-4S] cluster. Positions 156-389 (PGVRSTAYVS…LAVVNEIAIR (234 aa)) constitute a Radical SAM core domain. In terms of domain architecture, TRAM spans 392–455 (RDLVGTVQEV…GFTLYGVPCP (64 aa)).

This sequence belongs to the methylthiotransferase family. MiaB subfamily. Monomer. The cofactor is [4Fe-4S] cluster.

Its subcellular location is the cytoplasm. The catalysed reaction is N(6)-dimethylallyladenosine(37) in tRNA + (sulfur carrier)-SH + AH2 + 2 S-adenosyl-L-methionine = 2-methylsulfanyl-N(6)-dimethylallyladenosine(37) in tRNA + (sulfur carrier)-H + 5'-deoxyadenosine + L-methionine + A + S-adenosyl-L-homocysteine + 2 H(+). In terms of biological role, catalyzes the methylthiolation of N6-(dimethylallyl)adenosine (i(6)A), leading to the formation of 2-methylthio-N6-(dimethylallyl)adenosine (ms(2)i(6)A) at position 37 in tRNAs that read codons beginning with uridine. This Akkermansia muciniphila (strain ATCC BAA-835 / DSM 22959 / JCM 33894 / BCRC 81048 / CCUG 64013 / CIP 107961 / Muc) protein is tRNA-2-methylthio-N(6)-dimethylallyladenosine synthase.